The primary structure comprises 606 residues: UPF0329 protein ECU06_0090 (606 aa).

The segment at K317–N401 is disordered. The span at E328–G353 shows a compositional bias: basic and acidic residues. Residues A354–S367 are compositionally biased toward basic residues. Basic and acidic residues predominate over residues S381 to N401.

The protein belongs to the UPF0329 family.

The protein is UPF0329 protein ECU06_0090 of Encephalitozoon cuniculi (strain GB-M1) (Microsporidian parasite).